The following is a 407-amino-acid chain: Heparan-sulfate 6-O-sulfotransferase 1-B (407 aa).

Residues Met-8–Lys-14 lie on the Cytoplasmic side of the membrane. Residues Phe-15–Pro-35 form a helical; Signal-anchor for type II membrane protein membrane-spanning segment. Residues Gly-36 to Trp-407 lie on the Lumenal side of the membrane. His-92–Thr-100 lines the 3'-phosphoadenylyl sulfate pocket. Residues Lys-122–Lys-123, Arg-139, Trp-144, and His-149 contribute to the substrate site. The active-site Proton acceptor is the His-149. The 3'-phosphoadenylyl sulfate site is built by Arg-183 and Ser-191. His-195 and Trp-202 together coordinate substrate. The N-linked (GlcNAc...) asparagine glycan is linked to Asn-262. Met-315–Tyr-317 contributes to the 3'-phosphoadenylyl sulfate binding site. The N-linked (GlcNAc...) asparagine glycan is linked to Asn-318. A 3'-phosphoadenylyl sulfate-binding site is contributed by Arg-321–Ala-322. Residue Asn-329 is glycosylated (N-linked (GlcNAc...) asparagine).

The protein belongs to the sulfotransferase 6 family. In terms of tissue distribution, during early somitogenesis, first expressed in floor plate and somites. During mid-somitogenesis, expressed strongly in somites and more weakly in eye and hindbrain. During late somitogenesis, expressed in eye, hindbrain and posterior somites. At 24 hours post-fertilization (hpf), expressed in lens, forebrain, hindbrain, otic vesicle, anterior spinal cord neurons and posterior somites. At 36 hpf, expressed in the retinal ciliary marginal zone, brain, pancreas and weakly in pectoral fin. At 48 hpf, expressed in the retinal ciliary marginal zone, retinal ganglion cells, rhombomeres, otic vesicle and weakly in pectoral fin.

The protein resides in the membrane. It carries out the reaction alpha-D-glucosaminyl-[heparan sulfate](n) + 3'-phosphoadenylyl sulfate = 6-sulfo-alpha-D-glucosaminyl-[heparan sulfate](n) + adenosine 3',5'-bisphosphate + H(+). Functionally, 6-O-sulfation enzyme which catalyzes the transfer of sulfate from 3'-phosphoadenosine 5'-phosphosulfate (PAPS) to position 6 of the N-sulfoglucosamine residue (GlcNS) of heparan sulfate. The chain is Heparan-sulfate 6-O-sulfotransferase 1-B from Danio rerio (Zebrafish).